Here is a 21-residue protein sequence, read N- to C-terminus: Ferredoxin (21 aa).

The 20-residue stretch at 2 to 21 (KVKVDADACIGCGVCVELCP) folds into the 4Fe-4S ferredoxin-type domain. [4Fe-4S] cluster is bound by residues C10, C13, and C16.

As to quaternary structure, monomer. Requires [4Fe-4S] cluster as cofactor.

Functionally, ferredoxins are iron-sulfur proteins that transfer electrons in a wide variety of metabolic reactions. The polypeptide is Ferredoxin (fdxA) (Pyrococcus woesei).